A 179-amino-acid polypeptide reads, in one-letter code: Adenine phosphoribosyltransferase (179 aa).

Belongs to the purine/pyrimidine phosphoribosyltransferase family. In terms of assembly, homodimer.

It is found in the cytoplasm. It catalyses the reaction AMP + diphosphate = 5-phospho-alpha-D-ribose 1-diphosphate + adenine. It participates in purine metabolism; AMP biosynthesis via salvage pathway; AMP from adenine: step 1/1. Its function is as follows. Catalyzes a salvage reaction resulting in the formation of AMP, that is energically less costly than de novo synthesis. The chain is Adenine phosphoribosyltransferase from Helicobacter pylori (strain G27).